The following is a 327-amino-acid chain: L-serine dehydratase/L-threonine deaminase (327 aa).

The residue at position 2 (Ala2) is an N-acetylalanine. Lys41 carries the N6-(pyridoxal phosphate)lysine modification. Residue Pro128 coordinates pyridoxal 5'-phosphate.

The protein belongs to the serine/threonine dehydratase family. Homodimer. Pyridoxal 5'-phosphate is required as a cofactor.

The protein resides in the cytoplasm. It carries out the reaction L-serine = pyruvate + NH4(+). The enzyme catalyses L-threonine = 2-oxobutanoate + NH4(+). It functions in the pathway carbohydrate biosynthesis; gluconeogenesis. Functionally, catalyzes the pyridoxal-phosphate-dependent dehydrative deamination of L-threonine and L-serine to ammonia and alpha-ketobutyrate and pyruvate, respectively. The chain is L-serine dehydratase/L-threonine deaminase (Sds) from Mus musculus (Mouse).